Consider the following 164-residue polypeptide: Putative pre-16S rRNA nuclease (164 aa).

The protein belongs to the YqgF nuclease family.

It localises to the cytoplasm. Functionally, could be a nuclease involved in processing of the 5'-end of pre-16S rRNA. This Rhizobium rhizogenes (strain K84 / ATCC BAA-868) (Agrobacterium radiobacter) protein is Putative pre-16S rRNA nuclease.